The following is a 208-amino-acid chain: Uracil phosphoribosyltransferase (208 aa).

Residues Arg78, Arg103, and 130–138 (DPMLATGGS) contribute to the 5-phospho-alpha-D-ribose 1-diphosphate site. Uracil is bound by residues Ile193 and 198 to 200 (GDA). Asp199 serves as a coordination point for 5-phospho-alpha-D-ribose 1-diphosphate.

This sequence belongs to the UPRTase family. Requires Mg(2+) as cofactor.

The enzyme catalyses UMP + diphosphate = 5-phospho-alpha-D-ribose 1-diphosphate + uracil. The protein operates within pyrimidine metabolism; UMP biosynthesis via salvage pathway; UMP from uracil: step 1/1. Allosterically activated by GTP. Catalyzes the conversion of uracil and 5-phospho-alpha-D-ribose 1-diphosphate (PRPP) to UMP and diphosphate. The chain is Uracil phosphoribosyltransferase from Klebsiella pneumoniae subsp. pneumoniae (strain ATCC 700721 / MGH 78578).